A 409-amino-acid chain; its full sequence is Argininosuccinate synthase (409 aa).

ATP-binding positions include 12–20 and Ala39; that span reads AYSGGLDTS. Residues Tyr90 and Ser95 each contribute to the L-citrulline site. Gly120 lines the ATP pocket. Residues Thr122, Asn126, and Asp127 each coordinate L-aspartate. Asn126 contributes to the L-citrulline binding site. Positions 130, 181, 190, 266, and 278 each coordinate L-citrulline.

It belongs to the argininosuccinate synthase family. Type 1 subfamily. As to quaternary structure, homotetramer.

Its subcellular location is the cytoplasm. The catalysed reaction is L-citrulline + L-aspartate + ATP = 2-(N(omega)-L-arginino)succinate + AMP + diphosphate + H(+). Its pathway is amino-acid biosynthesis; L-arginine biosynthesis; L-arginine from L-ornithine and carbamoyl phosphate: step 2/3. The chain is Argininosuccinate synthase from Gluconacetobacter diazotrophicus (strain ATCC 49037 / DSM 5601 / CCUG 37298 / CIP 103539 / LMG 7603 / PAl5).